Consider the following 136-residue polypeptide: Prefoldin subunit alpha (136 aa).

The protein belongs to the prefoldin subunit alpha family. Heterohexamer of two alpha and four beta subunits.

It is found in the cytoplasm. Its function is as follows. Molecular chaperone capable of stabilizing a range of proteins. Seems to fulfill an ATP-independent, HSP70-like function in archaeal de novo protein folding. This chain is Prefoldin subunit alpha, found in Pyrobaculum arsenaticum (strain DSM 13514 / JCM 11321 / PZ6).